The primary structure comprises 462 residues: MEGENNMEKGLLLAKKEDSANTTPLLIFSTFIIVSASFTFGAAIGYTADTMSSIMSDLDLSLAQFSLFGSLSTFGGMIGAIFSAKAASAFGHKMTLWVADLFCITGWLAISLAKDIIWLDMGRFLVGIGVGLISYVVPVYIAEITPKHVRGAFTFSNQLLQNCGVAVVYYFGNFLSWRTLAIIGSIPCWIQVIGLFFIPESPRWLAKKGRDKECEEVLQKLRGRKYDIVPEACEIKISVEASKKNSNINIRSLFEKRYAHQLTIGIGLMLLQQLCGTAGISSYGSTLFKLAGFPARIGMMVLSLIVVPKSLMGLILVDRWGRRPLLMTSALGLCLSCITLAVAFGVKDVPGIGKITPIFCFIGILSFTMMFAIGMGALPWIIMSEIFPMDIKVLAGSLVTIANWFTGWIANYAFNFMLVWSPSGTFIISAIICGATIVFTWCLVPETRRLTLEEIQLSFVNV.

A run of 12 helical transmembrane segments spans residues 25–45, 62–82, 101–121, 124–144, 151–171, 179–199, 262–282, 297–317, 326–346, 358–378, 399–419, and 424–444; these read LLIFSTFIIVSASFTFGAAIG, LAQFSLFGSLSTFGGMIGAIF, LFCITGWLAISLAKDIIWLDM, FLVGIGVGLISYVVPVYIAEI, GAFTFSNQLLQNCGVAVVYYF, TLAIIGSIPCWIQVIGLFFIP, LTIGIGLMLLQQLCGTAGISS, IGMMVLSLIVVPKSLMGLILV, LMTSALGLCLSCITLAVAFGV, IFCFIGILSFTMMFAIGMGAL, VTIANWFTGWIANYAFNFMLV, and GTFIISAIICGATIVFTWCLV.

This sequence belongs to the major facilitator superfamily. Sugar transporter (TC 2.A.1.1) family.

It is found in the membrane. Functionally, sugar transporter. The chain is Sugar transporter ERD6-like 12 (SUGTL5) from Arabidopsis thaliana (Mouse-ear cress).